Reading from the N-terminus, the 464-residue chain is ATP-dependent protease ATPase subunit HslU (464 aa).

ATP-binding positions include isoleucine 19, 61–66 (GVGKTE), aspartate 277, glutamate 342, and arginine 414.

This sequence belongs to the ClpX chaperone family. HslU subfamily. A double ring-shaped homohexamer of HslV is capped on each side by a ring-shaped HslU homohexamer. The assembly of the HslU/HslV complex is dependent on binding of ATP.

It localises to the cytoplasm. In terms of biological role, ATPase subunit of a proteasome-like degradation complex; this subunit has chaperone activity. The binding of ATP and its subsequent hydrolysis by HslU are essential for unfolding of protein substrates subsequently hydrolyzed by HslV. HslU recognizes the N-terminal part of its protein substrates and unfolds these before they are guided to HslV for hydrolysis. The protein is ATP-dependent protease ATPase subunit HslU of Lactobacillus gasseri (strain ATCC 33323 / DSM 20243 / BCRC 14619 / CIP 102991 / JCM 1131 / KCTC 3163 / NCIMB 11718 / NCTC 13722 / AM63).